Here is an 80-residue protein sequence, read N- to C-terminus: Conotoxin SmIVB (80 aa).

Positions 1–21 (MGMRMMFTVFLLVVLATTVVS) are cleaved as a signal peptide. The propeptide occupies 22-38 (IPSDRASDGRNAEVNER). At Pro40 the chain carries 4-hydroxyproline. O-linked (HexNAc...) serine glycosylation occurs at Ser45. 5 positions are modified to 4-hydroxyproline: Pro55, Pro60, Pro61, Pro70, and Pro72. Ser75 is subject to Serine amide. A propeptide spanning residues 76-80 (GRRNH) is cleaved from the precursor.

This sequence belongs to the conotoxin A superfamily. Contains 3 disulfide bonds. As to expression, expressed by the venom duct.

Its subcellular location is the secreted. In terms of biological role, neurotoxin with probable activity on sodium channel. Induces intense repetitive firing of the frog neuromuscular junction, leading to a tetanic contracture in muscle fiber (spastic paralysis). In vivo, shows the same effect as the whole venom when injected on fish prey. The protein is Conotoxin SmIVB of Conus stercusmuscarum (Fly-specked cone).